The chain runs to 359 residues: MENKKVIVGISGGVDSSVSALLLKQQGYDVTGVFMKNWEEDDTDEFCSAEQDIADAQAVCDSIGIPFKKINFAAEYWDNVFEHFLIEYKAGRTPNPDILCNKEIKFKAFLSYVHLLGGDYIATGHYARTRVLEDGSVQLVKGLDDNKDQTYFLYTLGQEQLRQTIFPIGNIEKSKVREIAKENNLVTFDKKDSTGICFIGERKFKEFLSKFLPAQKGEIHDENGIKIGMHDGLMYYTIGQRQGLGIGGVKDRPEVPWFAAKKDLENNVLIAVQGHDHPLLFKQSLQAIELSWVAGMAPADKFRCAAKVRYRQKDQSCEVEVNQDGSVNVTFDQPQRAITPGQSVVFYIDDVCLGGGVII.

Residues 9–16 (GISGGVDS) and Met35 each bind ATP. Positions 95-97 (NPD) are interaction with target base in tRNA. The active-site Nucleophile is the Cys100. A disulfide bond links Cys100 and Cys197. Gly124 is an ATP binding site. Residues 147 to 149 (KDQ) form an interaction with tRNA region. The active-site Cysteine persulfide intermediate is the Cys197. Positions 309–310 (RY) are interaction with tRNA.

Belongs to the MnmA/TRMU family.

It localises to the cytoplasm. It catalyses the reaction S-sulfanyl-L-cysteinyl-[protein] + uridine(34) in tRNA + AH2 + ATP = 2-thiouridine(34) in tRNA + L-cysteinyl-[protein] + A + AMP + diphosphate + H(+). Its function is as follows. Catalyzes the 2-thiolation of uridine at the wobble position (U34) of tRNA, leading to the formation of s(2)U34. This Francisella tularensis subsp. novicida (strain U112) protein is tRNA-specific 2-thiouridylase MnmA.